Here is a 227-residue protein sequence, read N- to C-terminus: Large ribosomal subunit protein uL3 (227 aa).

Position 151 is an N5-methylglutamine (Gln151).

The protein belongs to the universal ribosomal protein uL3 family. As to quaternary structure, part of the 50S ribosomal subunit. Forms a cluster with proteins L14 and L19. Post-translationally, methylated by PrmB.

One of the primary rRNA binding proteins, it binds directly near the 3'-end of the 23S rRNA, where it nucleates assembly of the 50S subunit. The protein is Large ribosomal subunit protein uL3 of Gluconobacter oxydans (strain 621H) (Gluconobacter suboxydans).